Here is a 611-residue protein sequence, read N- to C-terminus: Glutamine--fructose-6-phosphate aminotransferase [isomerizing] (611 aa).

Residue Cys-2 is the Nucleophile; for GATase activity of the active site. A Glutamine amidotransferase type-2 domain is found at 2–219; that stretch reads CGIVGAIAER…EGDIAEIRRD (218 aa). 2 consecutive SIS domains span residues 287-427 and 460-601; these read AAEL…VQKR and VSEL…VDQP. Residue Lys-606 is the For Fru-6P isomerization activity of the active site.

Homodimer.

Its subcellular location is the cytoplasm. The catalysed reaction is D-fructose 6-phosphate + L-glutamine = D-glucosamine 6-phosphate + L-glutamate. Its function is as follows. Catalyzes the first step in hexosamine metabolism, converting fructose-6P into glucosamine-6P using glutamine as a nitrogen source. This is Glutamine--fructose-6-phosphate aminotransferase [isomerizing] from Pseudomonas aeruginosa (strain ATCC 15692 / DSM 22644 / CIP 104116 / JCM 14847 / LMG 12228 / 1C / PRS 101 / PAO1).